The sequence spans 697 residues: Methionine--tRNA ligase (697 aa).

Residues 11–21 (PYANGPIHLGH) carry the 'HIGH' region motif. Zn(2+) contacts are provided by C142, C145, C155, and C158. Positions 343-347 (KMSKS) match the 'KMSKS' region motif. Residue K346 participates in ATP binding. One can recognise a tRNA-binding domain in the interval 595 to 697 (DFMKVEMTVA…DECKVGDKLA (103 aa)).

This sequence belongs to the class-I aminoacyl-tRNA synthetase family. MetG type 1 subfamily. Homodimer. Zn(2+) serves as cofactor.

The protein resides in the cytoplasm. The catalysed reaction is tRNA(Met) + L-methionine + ATP = L-methionyl-tRNA(Met) + AMP + diphosphate. Its function is as follows. Is required not only for elongation of protein synthesis but also for the initiation of all mRNA translation through initiator tRNA(fMet) aminoacylation. The polypeptide is Methionine--tRNA ligase (Psychrobacter sp. (strain PRwf-1)).